A 664-amino-acid polypeptide reads, in one-letter code: Cytoskeleton-associated protein 2 (664 aa).

Residues 1–38 (MAESRKRFLGRAARNPLPVTRDLQLPPTRRDQPAFREQ) are disordered. Basic and acidic residues predominate over residues 28-38 (TRRDQPAFREQ). The tract at residues 160–319 (PKQDSNVSKK…ASKDAARTDS (160 aa)) is association with alpha- and beta-tubulin. A Phosphoserine modification is found at S186. 4 disordered regions span residues 254–273 (IRSL…SRPL), 283–328 (LDKE…MVKP), 366–393 (GKGK…NPVG), and 512–545 (AHAT…KVEV). Polar residues predominate over residues 300 to 309 (GSSQAPSRSI). The segment covering 366 to 375 (GKGKGLKRPP) has biased composition (basic residues). The span at 533–545 (PGEENEHHGKVEV) shows a compositional bias: basic and acidic residues. A Phosphothreonine modification is found at T561. Residue S577 is modified to Phosphoserine. T579 bears the Phosphothreonine mark. S584 carries the phosphoserine modification.

The protein belongs to the CKAP2 family. In terms of assembly, associates with alpha- and beta-tubulins.

The protein resides in the cytoplasm. The protein localises to the cytoskeleton. It localises to the spindle. It is found in the spindle pole. Possesses microtubule stabilizing properties. Involved in regulating aneuploidy, cell cycling, and cell death in a p53-dependent manner. The chain is Cytoskeleton-associated protein 2 from Mus musculus (Mouse).